Reading from the N-terminus, the 323-residue chain is Iron-sulfur cluster transfer protein NUBPL (323 aa).

Alanine 65–serine 72 contacts ATP.

This sequence belongs to the Mrp/NBP35 ATP-binding proteins family. [4Fe-4S] cluster is required as a cofactor.

It is found in the mitochondrion. Functionally, iron-sulfur cluster transfer protein involved in the assembly of the mitochondrial membrane respiratory chain NADH dehydrogenase (Complex I). May deliver one or more Fe-S clusters to complex I subunits. This Dictyostelium discoideum (Social amoeba) protein is Iron-sulfur cluster transfer protein NUBPL (nubpl).